The chain runs to 339 residues: Glycerol-3-phosphate dehydrogenase [NAD(P)+] (339 aa).

Residues Ser15, Tyr16, His36, and Lys110 each contribute to the NADPH site. The sn-glycerol 3-phosphate site is built by Lys110, Gly139, and Thr141. Residue Ala143 participates in NADPH binding. Residues Lys195, Asp248, Ser258, Arg259, and Asn260 each coordinate sn-glycerol 3-phosphate. Lys195 (proton acceptor) is an active-site residue. Arg259 lines the NADPH pocket. 2 residues coordinate NADPH: Val283 and Glu285.

Belongs to the NAD-dependent glycerol-3-phosphate dehydrogenase family.

Its subcellular location is the cytoplasm. It catalyses the reaction sn-glycerol 3-phosphate + NAD(+) = dihydroxyacetone phosphate + NADH + H(+). It carries out the reaction sn-glycerol 3-phosphate + NADP(+) = dihydroxyacetone phosphate + NADPH + H(+). It functions in the pathway membrane lipid metabolism; glycerophospholipid metabolism. In terms of biological role, catalyzes the reduction of the glycolytic intermediate dihydroxyacetone phosphate (DHAP) to sn-glycerol 3-phosphate (G3P), the key precursor for phospholipid synthesis. The sequence is that of Glycerol-3-phosphate dehydrogenase [NAD(P)+] from Shigella flexneri serotype 5b (strain 8401).